Consider the following 1385-residue polypeptide: Defecation cycle abnormal dec-7 (1385 aa).

An N-terminal signal peptide occupies residues 1-19 (MWTARHAVALLVVLTYAYS). Residue asparagine 156 is glycosylated (N-linked (GlcNAc...) asparagine). Positions 234–262 (SQTNYGAPNYQQAGAQSAANQQFSNPSQY) are disordered. The span at 242-261 (NYQQAGAQSAANQQFSNPSQ) shows a compositional bias: low complexity. One can recognise an NIDO domain in the interval 285–450 (QIYGKRKKRQ…GRWIHRVDEV (166 aa)). N-linked (GlcNAc...) asparagine glycosylation is found at asparagine 313, asparagine 386, asparagine 413, asparagine 458, asparagine 480, asparagine 562, and asparagine 583. The 160-residue stretch at 681-840 (GRNWPIDMCI…DHCEFYYWRR (160 aa)) folds into the AMOP domain. The VWFD domain occupies 852 to 1088 (AAGYIYGEPH…FWKIDGTNDK (237 aa)). 5 N-linked (GlcNAc...) asparagine glycosylation sites follow: asparagine 909, asparagine 921, asparagine 975, asparagine 1009, and asparagine 1124. Positions 1179–1238 (ISCGPLLKKEGVVKTPPAANYLDGDKVVFSCKPKYYIHGDIERVCRNGTWSPGWWAWCRD) constitute a Sushi domain. 2 cysteine pairs are disulfide-bonded: cysteine 1181/cysteine 1223 and cysteine 1209/cysteine 1236. Asparagine 1225 is a glycosylation site (N-linked (GlcNAc...) asparagine). A helical transmembrane segment spans residues 1251-1271 (LLSIFGISLIFVIFFCILWNI). Residues 1321 to 1385 (MNQPSRPIPS…GNMRFETSAI (65 aa)) form a disordered region.

Highly expressed in the intestinal epithelia.

It localises to the membrane. The protein localises to the cell junction. Functionally, may negatively regulate activity of innexin gap junction protein inx-16, thereby mediating the rhythmic frequency of the defecation motor program. Required for the clustering of inx-16 to the cell-cell junction of the intestinal epithelia. Probably dispensable for intestinal integrity. May be a cytokine receptor. This is Defecation cycle abnormal dec-7 from Caenorhabditis elegans.